Here is a 302-residue protein sequence, read N- to C-terminus: UDP-N-acetylenolpyruvoylglucosamine reductase (302 aa).

An FAD-binding PCMH-type domain is found at 27-192; the sequence is KVGGAVDYLA…LSAKFALRPG (166 aa). Arg-171 is a catalytic residue. The Proton donor role is filled by Ser-221. The active site involves Glu-291.

It belongs to the MurB family. Requires FAD as cofactor.

It localises to the cytoplasm. The enzyme catalyses UDP-N-acetyl-alpha-D-muramate + NADP(+) = UDP-N-acetyl-3-O-(1-carboxyvinyl)-alpha-D-glucosamine + NADPH + H(+). Its pathway is cell wall biogenesis; peptidoglycan biosynthesis. Its function is as follows. Cell wall formation. This is UDP-N-acetylenolpyruvoylglucosamine reductase from Streptococcus suis (strain 98HAH33).